We begin with the raw amino-acid sequence, 847 residues long: B-cell receptor CD22 (847 aa).

The signal sequence occupies residues 1–19; it reads MHLLGPWLLLLVLEYLAFC. The region spanning 20-138 is the Ig-like V-type domain; that stretch reads DSSKWAFEHP…MERIHLNVSE (119 aa). Residues 20–687 are Extracellular-facing; it reads DSSKWAFEHP…YYSPETIGRR (668 aa). Residues N67, N101, and N112 are each glycosylated (N-linked (GlcNAc...) asparagine). N-acetylneuraminate is bound at residue R120. N-linked (GlcNAc...) asparagine glycosylation is found at N135, N164, N231, N295, N363, N428, N445, N448, and N479. 6 Ig-like C2-type domains span residues 143–235, 242–324, 331–416, 419–500, 505–582, and 593–676; these read PHIQ…DTVQ, PKLE…AEVF, PEPS…LDVQ, PKKV…VALN, PRDV…QTAS, and PRRL…STLN. C161 and C219 are joined by a disulfide. Intrachain disulfides connect C265-C309 and C353-C396. 2 cysteine pairs are disulfide-bonded: C442-C484 and C529-C571. N-linked (GlcNAc...) asparagine glycans are attached at residues N574 and N634. Cysteines 616 and 659 form a disulfide. A helical transmembrane segment spans residues 688-708; the sequence is VAVGLGSCLAILILAICGLKL. The Cytoplasmic segment spans residues 709 to 847; sequence QRRWKRTQSQ…ENVDYVILKH (139 aa). S725, S726, and S729 each carry phosphoserine. Short sequence motifs (ITIM motif) lie at residues 760 to 765 and 794 to 799; these read ISYTTL and VTYSVL. Y762 carries the phosphotyrosine modification. Y807, Y822, and Y842 each carry phosphotyrosine. 2 short sequence motifs (ITIM motif) span residues 820–825 and 840–845; these read IHYSEL and VDYVIL.

This sequence belongs to the immunoglobulin superfamily. SIGLEC (sialic acid binding Ig-like lectin) family. As to quaternary structure, predominantly monomer of isoform CD22-beta. Also found as heterodimer of isoform CD22-beta and a shorter isoform. Interacts with PTPN6/SHP-1, LYN, SYK, PIK3R1/PIK3R2 and PLCG1 upon phosphorylation. Interacts with GRB2, INPP5D and SHC1 upon phosphorylation. May form a complex with INPP5D/SHIP, GRB2 and SHC1. Post-translationally, phosphorylation of Tyr-762, Tyr-807 and Tyr-822 are involved in binding to SYK, GRB2 and SYK, respectively. Phosphorylation of Tyr-842 is involved in binding to SYK, PLCG2 and PIK3R1/PIK3R2. In terms of processing, phosphorylated on tyrosine residues by LYN.

It localises to the cell membrane. Most highly expressed siglec (sialic acid-binding immunoglobulin-like lectin) on B-cells that plays a role in various aspects of B-cell biology including differentiation, antigen presentation, and trafficking to bone marrow. Binds to alpha 2,6-linked sialic acid residues of surface molecules such as CD22 itself, CD45 and IgM in a cis configuration. Can also bind to ligands on other cells as an adhesion molecule in a trans configuration. Acts as an inhibitory coreceptor on the surface of B-cells and inhibits B-cell receptor induced signaling, characterized by inhibition of the calcium mobilization and cellular activation. Mechanistically, the immunoreceptor tyrosine-based inhibitory motif domain is phosphorylated by the Src kinase LYN, which in turn leads to the recruitment of the protein tyrosine phosphatase 1/PTPN6, leading to the negative regulation of BCR signaling. If this negative signaling from is of sufficient strength, apoptosis of the B-cell can be induced. In Gorilla gorilla gorilla (Western lowland gorilla), this protein is B-cell receptor CD22.